We begin with the raw amino-acid sequence, 326 residues long: uncharacterized protein (326 aa).

In terms of domain architecture, S4 RNA-binding spans 15-76 (VRIEKFCLKL…IEPYLHNHSE (62 aa)). The active site involves Asp-147.

Belongs to the pseudouridine synthase RluA family.

It catalyses the reaction a uridine in RNA = a pseudouridine in RNA. This is an uncharacterized protein from Mycoplasma pneumoniae (strain ATCC 29342 / M129 / Subtype 1) (Mycoplasmoides pneumoniae).